The primary structure comprises 946 residues: C-1-tetrahydrofolate synthase, cytoplasmic (946 aa).

The interval 2–319 is methylenetetrahydrofolate dehydrogenase and cyclohydrolase; the sequence is AGQVLDGKAC…PPLPLKLLTP (318 aa). Residues 51–55 and 98–100 contribute to the substrate site; these read YVRMK and VQL. 169–171 is an NADP(+) binding site; that stretch reads GRS. S176 is subject to Phosphoserine. S194 provides a ligand contact to NADP(+). 277-281 contacts substrate; that stretch reads PGGVG. T318 bears the Phosphothreonine mark. The tract at residues 320–946 is formyltetrahydrofolate synthetase; sequence VPSDIDISRA…DDDGEIDGLF (627 aa). Residue S322 is modified to Phosphoserine. An ATP-binding site is contributed by 384–391; the sequence is TPLGEGKS.

In the N-terminal section; belongs to the tetrahydrofolate dehydrogenase/cyclohydrolase family. It in the C-terminal section; belongs to the formate--tetrahydrofolate ligase family. As to quaternary structure, homodimer.

Its subcellular location is the cytoplasm. The protein localises to the nucleus. The enzyme catalyses (6R)-5,10-methylene-5,6,7,8-tetrahydrofolate + NADP(+) = (6R)-5,10-methenyltetrahydrofolate + NADPH. It carries out the reaction (6R)-5,10-methenyltetrahydrofolate + H2O = (6R)-10-formyltetrahydrofolate + H(+). It catalyses the reaction (6S)-5,6,7,8-tetrahydrofolate + formate + ATP = (6R)-10-formyltetrahydrofolate + ADP + phosphate. It participates in one-carbon metabolism; tetrahydrofolate interconversion. Functionally, cytoplasmic isozyme of C-1-tetrahydrofolate synthase. The trifunctional enzyme catalyzes the interconversion of the one-carbon derivatives of tetrahydrofolate (THF) between different oxidation states by the enzymatic activities 10-formyltetrahydrofolate synthetase, 5,lO-methenyltetrahydrofolate cyclohydrolase, and 5,lO-methylenetetrahydrofolate dehydrogenase. Involved in the generation of one-carbon intermediates in the biosynthesis of the purine bases. The chain is C-1-tetrahydrofolate synthase, cytoplasmic (ADE3) from Saccharomyces cerevisiae (strain ATCC 204508 / S288c) (Baker's yeast).